We begin with the raw amino-acid sequence, 139 residues long: Cystatin-11 (139 aa).

The N-terminal stretch at 1-28 (MMARLWKTTWFLLAILVALVAFSYQVKR) is a signal peptide. Intrachain disulfides connect Cys94–Cys102 and Cys115–Cys135. Asn134 is a glycosylation site (N-linked (GlcNAc...) asparagine).

It belongs to the cystatin family.

The protein resides in the secreted. In terms of biological role, has antibacterial activity against the Gram-negative bacteria E.coli. May play a role in sperm maturation and fertilization. This chain is Cystatin-11 (Cst11), found in Rattus norvegicus (Rat).